The sequence spans 500 residues: Glycerol kinase (500 aa).

Thr13 serves as a coordination point for ADP. 3 residues coordinate ATP: Thr13, Thr14, and Ser15. Thr13 is a binding site for sn-glycerol 3-phosphate. Arg17 contributes to the ADP binding site. Positions 83, 84, and 135 each coordinate sn-glycerol 3-phosphate. Positions 83, 84, and 135 each coordinate glycerol. Position 231 is a phosphohistidine; by HPr (His231). Asp245 lines the sn-glycerol 3-phosphate pocket. Asp245 and Gln246 together coordinate glycerol. Residues Thr267 and Gly310 each coordinate ADP. Residues Thr267, Gly310, Gln314, and Gly411 each contribute to the ATP site. ADP is bound by residues Gly411 and Asn415.

Belongs to the FGGY kinase family. As to quaternary structure, homotetramer and homodimer (in equilibrium). The phosphoenolpyruvate-dependent sugar phosphotransferase system (PTS), including enzyme I, and histidine-containing protein (HPr) are required for the phosphorylation, which leads to the activation of the enzyme.

The catalysed reaction is glycerol + ATP = sn-glycerol 3-phosphate + ADP + H(+). The protein operates within polyol metabolism; glycerol degradation via glycerol kinase pathway; sn-glycerol 3-phosphate from glycerol: step 1/1. Its activity is regulated as follows. Activated by phosphorylation and inhibited by fructose 1,6-bisphosphate (FBP). In terms of biological role, key enzyme in the regulation of glycerol uptake and metabolism. Catalyzes the phosphorylation of glycerol to yield sn-glycerol 3-phosphate. This Oceanobacillus iheyensis (strain DSM 14371 / CIP 107618 / JCM 11309 / KCTC 3954 / HTE831) protein is Glycerol kinase.